We begin with the raw amino-acid sequence, 329 residues long: Tryptophan--tRNA ligase (329 aa).

Residues 9-11 and 17-18 contribute to the ATP site; these read QPS and GN. The 'HIGH' region signature appears at 10-18; sequence PSGIPTIGN. Position 133 (Asp133) interacts with L-tryptophan. Residues 145 to 147, Val184, and 193 to 197 contribute to the ATP site; these read GDD and KMSKS. A 'KMSKS' region motif is present at residues 193–197; that stretch reads KMSKS.

Belongs to the class-I aminoacyl-tRNA synthetase family. Homodimer.

It localises to the cytoplasm. It carries out the reaction tRNA(Trp) + L-tryptophan + ATP = L-tryptophyl-tRNA(Trp) + AMP + diphosphate + H(+). In terms of biological role, catalyzes the attachment of tryptophan to tRNA(Trp). This chain is Tryptophan--tRNA ligase, found in Staphylococcus aureus (strain MRSA252).